The sequence spans 95 residues: Small ribosomal subunit protein bS6 (95 aa).

The protein belongs to the bacterial ribosomal protein bS6 family.

Functionally, binds together with bS18 to 16S ribosomal RNA. The chain is Small ribosomal subunit protein bS6 from Clostridium acetobutylicum (strain ATCC 824 / DSM 792 / JCM 1419 / IAM 19013 / LMG 5710 / NBRC 13948 / NRRL B-527 / VKM B-1787 / 2291 / W).